Here is a 172-residue protein sequence, read N- to C-terminus: MVINFEELHPNERVELERNIFFSTLEQLKGWARSNSLWPMTFGLACCAIEMMGVGSSHYDLDRFGSFFRTSPRQSDVMIVSGTVTKKMAPIVRRLYDQMPEPKWVIAMGSCATAGGPYVNSYAVVKGVDQIVPVDVYIPGCPPNPAALIYGINKLKEKIRYEAKTGKQVTNK.

4 residues coordinate [4Fe-4S] cluster: C46, C47, C111, and C141.

Belongs to the complex I 20 kDa subunit family. NDH-1 is composed of 14 different subunits. Subunits NuoB, C, D, E, F, and G constitute the peripheral sector of the complex. [4Fe-4S] cluster is required as a cofactor.

The protein localises to the cell membrane. The enzyme catalyses a quinone + NADH + 5 H(+)(in) = a quinol + NAD(+) + 4 H(+)(out). Functionally, NDH-1 shuttles electrons from NADH, via FMN and iron-sulfur (Fe-S) centers, to quinones in the respiratory chain. The immediate electron acceptor for the enzyme in this species is believed to be a menaquinone. Couples the redox reaction to proton translocation (for every two electrons transferred, four hydrogen ions are translocated across the cytoplasmic membrane), and thus conserves the redox energy in a proton gradient. The chain is NADH-quinone oxidoreductase subunit B from Bacillus cereus (strain G9842).